Reading from the N-terminus, the 366-residue chain is Putative actin-9 (366 aa).

It belongs to the actin family. As to quaternary structure, polymerization of globular actin (G-actin) leads to a structural filament (F-actin) in the form of a two-stranded helix. The binding of profilin to monomeric G-actin cause the sequestration of actin into profilactin complexes, and prevents the polymerization.

Its subcellular location is the cytoplasm. The protein localises to the cytoskeleton. In terms of biological role, actins are highly conserved proteins that are involved in various types of cell motility and are ubiquitously expressed in all eukaryotic cells. Essential component of cell cytoskeleton; plays an important role in cytoplasmic streaming, cell shape determination, cell division, organelle movement and extension growth. The sequence is that of Putative actin-9 (ACT9) from Arabidopsis thaliana (Mouse-ear cress).